A 358-amino-acid polypeptide reads, in one-letter code: Uroporphyrinogen decarboxylase (358 aa).

Residues 29-33 (RQAGR), D79, Y156, T211, and H329 each bind substrate.

It belongs to the uroporphyrinogen decarboxylase family. As to quaternary structure, homodimer.

The protein localises to the cytoplasm. It carries out the reaction uroporphyrinogen III + 4 H(+) = coproporphyrinogen III + 4 CO2. It functions in the pathway porphyrin-containing compound metabolism; protoporphyrin-IX biosynthesis; coproporphyrinogen-III from 5-aminolevulinate: step 4/4. Catalyzes the decarboxylation of four acetate groups of uroporphyrinogen-III to yield coproporphyrinogen-III. This Idiomarina loihiensis (strain ATCC BAA-735 / DSM 15497 / L2-TR) protein is Uroporphyrinogen decarboxylase.